Consider the following 1362-residue polypeptide: Bromodomain-containing protein 4B (1362 aa).

Disordered regions lie at residues 22 to 57 (EGAQ…QPKR), 200 to 243 (SLGD…HPPA), 274 to 367 (LANH…DSKT), 476 to 639 (DEPE…SYEE), 699 to 941 (CLRK…TQSP), and 953 to 1349 (SQAP…MNFQ). Over residues 34 to 49 (QPQPQTPMMQTPPPEI) the composition is skewed to pro residues. The region spanning 57–163 (RQTNQLQYLL…KLFLQKISEM (107 aa)) is the Bromo 1 domain. Positions 219–234 (TPTPPAVIRAPTPPQT) are enriched in pro residues. Over residues 326–342 (PRKESGRQIRPIKKTEV) the composition is skewed to basic and acidic residues. Over residues 348 to 358 (PAPPDLHPQPA) the composition is skewed to pro residues. The region spanning 365 to 474 (SKTSEQLRYC…DVFEMRFAKM (110 aa)) is the Bromo 2 domain. Residues 481–503 (APAPVPSPAPGPPAPSIKIPPPT) show a composition bias toward pro residues. Residues 503-521 (TSSDTSSDSSSDSESSSDS) form an NPS region region. The span at 504–516 (SSDTSSDSSSDSE) shows a compositional bias: low complexity. The segment at 542 to 597 (QLAALSQPQPNKPKKKEREKRKEKHKRKEEVEETRKGRIREPPAKKPKKSVQVSGG) is BID region. Residues 553–568 (KPKKKEREKRKEKHKR) are compositionally biased toward basic residues. Residues 569-585 (KEEVEETRKGRIREPPA) are compositionally biased toward basic and acidic residues. Residues 606 to 621 (PPPVTRPARPAPPPAP) are compositionally biased toward pro residues. The NET domain occupies 623 to 707 (ESSEEDTQRC…SCLRKKRKPQ (85 aa)). Positions 628-639 (DTQRCRPMSYEE) are enriched in basic and acidic residues. A compositionally biased stretch (low complexity) spans 722-737 (SYSSSESESSSESSTS). Basic residues predominate over residues 750-766 (QKKKGHSGRESRKHHHP). Composition is skewed to pro residues over residues 772–793 (IAPP…PPPS) and 871–889 (PARP…PHHQ). Residues 893–905 (HVHHHHHHHHHAQ) show a composition bias toward basic residues. Over residues 926–941 (YLQQLHKSQQPPTQSP) the composition is skewed to polar residues. Composition is skewed to low complexity over residues 953 to 963 (SQAPMAAPAQS), 977 to 1006 (SSAS…QPAG), 1014 to 1028 (QQQQ…PALQ), and 1041 to 1050 (HQQAKQQQVI). The interval 1061–1361 (RQQKQETYPG…LMEIFEQNLF (301 aa)) is C-terminal (CTD) region. Over residues 1086 to 1099 (QVPPYPGLTHPPSP) the composition is skewed to pro residues. The span at 1186–1207 (PEKEKQKQEPKTPVAPKKDLKI) shows a compositional bias: basic and acidic residues. Residues 1224–1234 (PTSAGKSTSDS) are compositionally biased toward polar residues. A compositionally biased stretch (basic and acidic residues) spans 1236–1293 (ELFRRQAREKEERERALKHQAEQAERMRREQERMRTREDDDVQDQTRKAHEEARRRQE). A compositionally biased stretch (low complexity) spans 1308 to 1319 (PAAPSPAQSSQP). A compositionally biased stretch (basic and acidic residues) spans 1322–1334 (DQREMARKREQER).

The protein belongs to the BET family.

It localises to the nucleus. Its subcellular location is the chromosome. Functionally, chromatin reader protein that recognizes and binds acetylated histones and plays a key role in transmission of epigenetic memory across cell divisions and transcription regulation. Remains associated with acetylated chromatin throughout the entire cell cycle and provides epigenetic memory for postmitotic G1 gene transcription by preserving acetylated chromatin status and maintaining high-order chromatin structure. During interphase, plays a key role in regulating the transcription of signal-inducible genes by associating with the P-TEFb complex and recruiting it to promoters. The protein is Bromodomain-containing protein 4B (brd4-b) of Xenopus laevis (African clawed frog).